Here is a 349-residue protein sequence, read N- to C-terminus: Protein-glutamate methylesterase/protein-glutamine glutaminase (349 aa).

One can recognise a Response regulatory domain in the interval Arg-5–Met-122. Residue Asp-56 is modified to 4-aspartylphosphate. The CheB-type methylesterase domain maps to Leu-152 to Gly-344. Active-site residues include Ser-164, His-190, and Asp-286.

This sequence belongs to the CheB family. Phosphorylated by CheA. Phosphorylation of the N-terminal regulatory domain activates the methylesterase activity.

It localises to the cytoplasm. The catalysed reaction is [protein]-L-glutamate 5-O-methyl ester + H2O = L-glutamyl-[protein] + methanol + H(+). It carries out the reaction L-glutaminyl-[protein] + H2O = L-glutamyl-[protein] + NH4(+). Functionally, involved in chemotaxis. Part of a chemotaxis signal transduction system that modulates chemotaxis in response to various stimuli. Catalyzes the demethylation of specific methylglutamate residues introduced into the chemoreceptors (methyl-accepting chemotaxis proteins or MCP) by CheR. Also mediates the irreversible deamidation of specific glutamine residues to glutamic acid. In Salmonella paratyphi A (strain ATCC 9150 / SARB42), this protein is Protein-glutamate methylesterase/protein-glutamine glutaminase.